Reading from the N-terminus, the 915-residue chain is Protein SLFN14 (915 aa).

A compositionally biased stretch (basic residues) spans 157–167 (AAQRGRRRLHP). The segment at 157–176 (AAQRGRRRLHPPRASNSNLQ) is disordered. The interval 204-389 (ESTHVEFKRF…KVLEFKGALQ (186 aa)) is required for endoribonuclease activity. The interval 390–569 (RHLFPVTQKT…QLGCEFFNLL (180 aa)) is required for ribosome binding.

As to quaternary structure, associates with ribosomes in an ATP-independent manner. The cofactor is Mg(2+). It depends on Mn(2+) as a cofactor. In terms of tissue distribution, detected in reticulocytes (at protein level).

The protein resides in the nucleus. In terms of biological role, shows no ribosome-associated and endoribonuclease activities. Functionally, displays polysome-associated endoribonuclease activity towards mRNAs and rRNAs. May play a role in RNA surveillance pathways by recognizing stalled ribosomes and triggering endonucleolytic cleavage of aberrant mRNAs. Cleaves RNAs in a magnesium-, manganese-dependent and ATP-independent manner. Involved in correct maturation of megakaryocytes and especially important for proplatelet extension. The chain is Protein SLFN14 from Oryctolagus cuniculus (Rabbit).